Reading from the N-terminus, the 423-residue chain is MDKIIVEGGQTQLQGQVVIEGAKNAVLPLLAATILPSQGKTLLTNVPILSDVFTMNNVVRGLDIQVDFNCDKKEILVDASGDILDVAPYEFVSQMRASIVVLGPILARNGHAKVSMPGGCTIGSRPIDLHLKGLEAMGATITQNGGDITAQAEKLKGANIYMDFPSVGATQNLMMAATLASGTTTIENAAREPEIVDLAQLLNKMGAKVKGAGTETLTIIGVDALHGTEHDVVQDRIEAGTFMVAAAMTSGNVLVKDAIWEHNRPLISKLMEMGVEVSEEEDGIRVKADTKKLKPVTVKTLPHPGFPTDMQAQFTALMAVVNGESTMIETVFENRFQHLEEMRRMGLQTEILRDTAMIHGGRALQGAPVMSTDLRASAALILAGMVAQGQTVVGQLTHLDRGYYQFHEKLAALGANIKRVSEA.

A phosphoenolpyruvate-binding site is contributed by Lys23–Asn24. UDP-N-acetyl-alpha-D-glucosamine is bound at residue Arg96. Cys120 acts as the Proton donor in catalysis. Cys120 is subject to 2-(S-cysteinyl)pyruvic acid O-phosphothioketal. UDP-N-acetyl-alpha-D-glucosamine-binding positions include Arg125–Leu129, Asp309, and Val331.

Belongs to the EPSP synthase family. MurA subfamily.

The protein localises to the cytoplasm. The enzyme catalyses phosphoenolpyruvate + UDP-N-acetyl-alpha-D-glucosamine = UDP-N-acetyl-3-O-(1-carboxyvinyl)-alpha-D-glucosamine + phosphate. Its pathway is cell wall biogenesis; peptidoglycan biosynthesis. In terms of biological role, cell wall formation. Adds enolpyruvyl to UDP-N-acetylglucosamine. The polypeptide is UDP-N-acetylglucosamine 1-carboxyvinyltransferase 2 (Streptococcus agalactiae serotype Ia (strain ATCC 27591 / A909 / CDC SS700)).